The primary structure comprises 257 residues: Imidazole glycerol phosphate synthase subunit HisF (257 aa).

Active-site residues include D11 and D130.

This sequence belongs to the HisA/HisF family. Heterodimer of HisH and HisF.

It localises to the cytoplasm. The catalysed reaction is 5-[(5-phospho-1-deoxy-D-ribulos-1-ylimino)methylamino]-1-(5-phospho-beta-D-ribosyl)imidazole-4-carboxamide + L-glutamine = D-erythro-1-(imidazol-4-yl)glycerol 3-phosphate + 5-amino-1-(5-phospho-beta-D-ribosyl)imidazole-4-carboxamide + L-glutamate + H(+). It functions in the pathway amino-acid biosynthesis; L-histidine biosynthesis; L-histidine from 5-phospho-alpha-D-ribose 1-diphosphate: step 5/9. Functionally, IGPS catalyzes the conversion of PRFAR and glutamine to IGP, AICAR and glutamate. The HisF subunit catalyzes the cyclization activity that produces IGP and AICAR from PRFAR using the ammonia provided by the HisH subunit. This chain is Imidazole glycerol phosphate synthase subunit HisF, found in Vibrio cholerae serotype O1 (strain ATCC 39541 / Classical Ogawa 395 / O395).